The following is a 252-amino-acid chain: Carboxymethylenebutenolidase (252 aa).

A disordered region spans residues 1–28 (MCHNKSSAPPTPAHISIQQNRTPGTDPV). Active-site residues include C126, D183, and H214.

It belongs to the dienelactone hydrolase family.

It catalyses the reaction 2-(5-oxo-2,5-dihydrofuran-2-ylidene)acetate + H2O = 4-oxohex-2-enedioate + H(+). It participates in aromatic compound metabolism; 3-chlorocatechol degradation. Functionally, ring cleavage of cyclic ester dienelactone to produce maleylacetate. The polypeptide is Carboxymethylenebutenolidase (clcD) (Rhodococcus opacus (Nocardia opaca)).